Reading from the N-terminus, the 316-residue chain is GTP cyclohydrolase FolE2 1 (316 aa).

This sequence belongs to the GTP cyclohydrolase IV family.

The catalysed reaction is GTP + H2O = 7,8-dihydroneopterin 3'-triphosphate + formate + H(+). It participates in cofactor biosynthesis; 7,8-dihydroneopterin triphosphate biosynthesis; 7,8-dihydroneopterin triphosphate from GTP: step 1/1. Functionally, converts GTP to 7,8-dihydroneopterin triphosphate. The protein is GTP cyclohydrolase FolE2 1 of Burkholderia orbicola (strain AU 1054).